The sequence spans 236 residues: MWDNHQALNQVADWLFTLAGLTTIYLMVQWTIHLPLLPLKEVHIRSNSGSGELRHVTREQVSDVVHREVGGNFLTIDLEAARHTFEKLAWVRVASVRRIWPNGLDVVVEEHVPLAHWGDSALVNRQGEIFNATSDEPMPIFEGPRESVREMVHQHAVFTKLLQPLKQDVEQVELSPRRAWRVRLGNGTILELGREHLEKRLERYVQTHDLVVARLNQRLSYVDLRYVSGFAARGTR.

Over 1–14 (MWDNHQALNQVADW) the chain is Cytoplasmic. Residues 15 to 37 (LFTLAGLTTIYLMVQWTIHLPLL) form a helical membrane-spanning segment. The 75-residue stretch at 37–111 (LPLKEVHIRS…NGLDVVVEEH (75 aa)) folds into the POTRA domain. At 38-236 (PLKEVHIRSN…VSGFAARGTR (199 aa)) the chain is on the periplasmic side.

This sequence belongs to the FtsQ/DivIB family. FtsQ subfamily. Part of a complex composed of FtsB, FtsL and FtsQ.

It is found in the cell inner membrane. Functionally, essential cell division protein. May link together the upstream cell division proteins, which are predominantly cytoplasmic, with the downstream cell division proteins, which are predominantly periplasmic. May control correct divisome assembly. In Nitrosospira multiformis (strain ATCC 25196 / NCIMB 11849 / C 71), this protein is Cell division protein FtsQ.